A 503-amino-acid chain; its full sequence is MWSALFSHLREVHKRSGVKEEKLIMKSPAAAGEAAGCHKPQATATNKMTVLQSPLGLRTILTSLVAFFIVVSSVSLLFDRSQDAQAQLAVAQHQHQEVQLKQKPASAAVGEQKSVFVDQSSLRSQEAQVQWTSELQDVATDSGDGGVDGEEECNWSLGRWVYDNSSRPLYSGLKCSFIFDEVACDKYGRNDTKYQHWRWQPHGCNLPRFNATKFLEKLRNKRLVFVGDSVNRNQWVSMVCMVEHFIPDGRKMRVYNGSLISFKAFEYNATIDFYWSPLLLESNSDNPIIHRVEYRIIRADRIEKHANVWKDADFIVFNSYLWWRKQRDGMTMKVMYGSFEDGDAKLDEVEMVDGYEIALKKLTEYLGANINKNKTRIFFAGSSPAHSWASNWGGDDNNKCLNETEPIQIEDYRSATTDYGMMDKAKEIFGTLEPKGIHVQILNITQLSEYRKDAHPTIFRRQYVPLTKEQIANPSIYADCTHWCLPGVPDVWNEFLYAYLMHK.

The Cytoplasmic portion of the chain corresponds to 1–54 (MWSALFSHLREVHKRSGVKEEKLIMKSPAAAGEAAGCHKPQATATNKMTVLQSP). Residues 55–77 (LGLRTILTSLVAFFIVVSSVSLL) traverse the membrane as a helical; Signal-anchor for type II membrane protein segment. At 78 to 503 (FDRSQDAQAQ…EFLYAYLMHK (426 aa)) the chain is on the lumenal side. Cystine bridges form between cysteine 153–cysteine 204, cysteine 175–cysteine 240, cysteine 184–cysteine 484, and cysteine 400–cysteine 480. N-linked (GlcNAc...) asparagine glycans are attached at residues asparagine 154, asparagine 164, asparagine 190, and asparagine 210. The short motif at 227-229 (GDS) is the GDS motif element. The active-site Nucleophile is serine 229. N-linked (GlcNAc...) asparagine glycans are attached at residues asparagine 256, asparagine 268, asparagine 373, asparagine 402, and asparagine 443. Aspartate 479 functions as the Proton donor in the catalytic mechanism. The DXXH motif motif lies at 479 to 482 (DCTH). Histidine 482 (proton acceptor) is an active-site residue.

This sequence belongs to the PC-esterase family. TBL subfamily.

Its subcellular location is the golgi apparatus membrane. Functionally, xylan acetyltransferase required for 2-O- and 3-O-monoacetylation of xylosyl residues in xylan. Catalyzes the 2-O-acetylation of xylan, followed by nonenzymatic acetyl migration to the O-3 position, resulting in products that are monoacetylated at both O-2 and O-3 positions. The protein is Xylan O-acetyltransferase 12 of Oryza sativa subsp. japonica (Rice).